A 139-amino-acid polypeptide reads, in one-letter code: MGMISEFKAFAVKGNVVDMAVGIIIGAAFGKIVSSFVGDIIMPPLGILIGGVDFSDLAITLKAAEGDIPAVVLAYGKFIQTVIDFVIVAFAIFMGVKAINRLKREEAVAPSAPPTPTPQETLLTEIRDLLKSQNQNRLP.

Transmembrane regions (helical) follow at residues 9-29 (AFAVKGNVVDMAVGIIIGAAF) and 79-99 (IQTVIDFVIVAFAIFMGVKAI).

This sequence belongs to the MscL family. Homopentamer.

The protein resides in the cell inner membrane. Functionally, channel that opens in response to stretch forces in the membrane lipid bilayer. May participate in the regulation of osmotic pressure changes within the cell. This chain is Large-conductance mechanosensitive channel, found in Pseudomonas putida (strain W619).